The primary structure comprises 758 residues: 5-methyltetrahydropteroyltriglutamate--homocysteine methyltransferase (758 aa).

Residues Arg17–Lys20 and Lys117 contribute to the 5-methyltetrahydropteroyltri-L-glutamate site. L-homocysteine-binding positions include Ile434 to Ser436 and Glu487. L-methionine is bound by residues Ile434–Ser436 and Glu487. 5-methyltetrahydropteroyltri-L-glutamate is bound by residues Arg518 to Cys519 and Trp564. Asp602 is an L-homocysteine binding site. Asp602 provides a ligand contact to L-methionine. Glu608 contributes to the 5-methyltetrahydropteroyltri-L-glutamate binding site. The Zn(2+) site is built by His644, Cys646, and Glu668. Residue His697 is the Proton donor of the active site. A Zn(2+)-binding site is contributed by Cys729.

It belongs to the vitamin-B12 independent methionine synthase family. Requires Zn(2+) as cofactor.

The catalysed reaction is 5-methyltetrahydropteroyltri-L-glutamate + L-homocysteine = tetrahydropteroyltri-L-glutamate + L-methionine. The protein operates within amino-acid biosynthesis; L-methionine biosynthesis via de novo pathway; L-methionine from L-homocysteine (MetE route): step 1/1. Functionally, catalyzes the transfer of a methyl group from 5-methyltetrahydrofolate to homocysteine resulting in methionine formation. The polypeptide is 5-methyltetrahydropteroyltriglutamate--homocysteine methyltransferase (Yersinia pseudotuberculosis serotype O:1b (strain IP 31758)).